The following is a 216-amino-acid chain: MPVQVVSSEFVKTATRPPEWPRGQTPELAFVGRSNVGKSSMLNALTRKKGLARVSATPGRTRALQFFDVAYRPTPAARPRHVRFCDLPGYGYAKVSREERDRWAAMIEDYLRDRDVLRAVVLIVDARHAPSDSDVDAAAFLRATGRRVLVAATKMDKLPKTRRGAALRAVEGALALAKGEAVPFSAVEGTGTDALWARIASAATDEGAPAPAGAGA.

The EngB-type G domain maps to glutamine 24–aspartate 205. Residues glycine 32–serine 39, glycine 59–alanine 63, aspartate 86–glycine 89, threonine 153–aspartate 156, and phenylalanine 184–alanine 186 each bind GTP. Mg(2+) is bound by residues serine 39 and threonine 61.

This sequence belongs to the TRAFAC class TrmE-Era-EngA-EngB-Septin-like GTPase superfamily. EngB GTPase family. The cofactor is Mg(2+).

Functionally, necessary for normal cell division and for the maintenance of normal septation. This chain is Probable GTP-binding protein EngB, found in Anaeromyxobacter sp. (strain Fw109-5).